Here is a 719-residue protein sequence, read N- to C-terminus: Glutathionylspermidine synthase (719 aa).

A Peptidase C51 domain is found at 54–200; it reads CLPLSSFERK…TESGEVELLD (147 aa). Arginine 350 is a glutathione binding site. Position 350 to 352 (350 to 352) interacts with ATP; it reads RFD. Residues aspartate 352, glutamate 364, and asparagine 366 each contribute to the Mg(2+) site. Serine 369 contacts glutathione. Glutamate 432 is a binding site for spermidine. Glutamate 433 and threonine 501 together coordinate glutathione. Residues lysine 544, lysine 579, glycine 586, glutamine 653, and 689–691 each bind ATP; that span reads KIT.

This sequence in the C-terminal section; belongs to the glutathionylspermidine synthase preATP-grasp family. Mg(2+) is required as a cofactor. In terms of processing, the N-terminus is blocked.

It catalyses the reaction spermidine + glutathione + ATP = glutathionylspermidine + ADP + phosphate + H(+). Functionally, conjugates glutathione (gamma-Glu-Cys-Gly) and spermidine to form glutathionylspermidine in the biosynthesis trypanothione (N(1),N(8)-bis(glutathionyl)spermidine), which is involved in maintaining intracellular thiol redox and in defense against oxidants. In Crithidia fasciculata, this protein is Glutathionylspermidine synthase (GSP).